A 468-amino-acid chain; its full sequence is Glutamate--tRNA ligase (468 aa).

A 'HIGH' region motif is present at residues 8–18 (PSPTGDPHVGT). The short motif at 243-247 (KISKR) is the 'KMSKS' region element. Lys-246 serves as a coordination point for ATP.

This sequence belongs to the class-I aminoacyl-tRNA synthetase family. Glutamate--tRNA ligase type 1 subfamily. Monomer.

The protein resides in the cytoplasm. It carries out the reaction tRNA(Glu) + L-glutamate + ATP = L-glutamyl-tRNA(Glu) + AMP + diphosphate. Its function is as follows. Catalyzes the attachment of glutamate to tRNA(Glu) in a two-step reaction: glutamate is first activated by ATP to form Glu-AMP and then transferred to the acceptor end of tRNA(Glu). The protein is Glutamate--tRNA ligase of Thermus thermophilus (strain ATCC BAA-163 / DSM 7039 / HB27).